Consider the following 120-residue polypeptide: Response regulator receiver protein CpdR (120 aa).

One can recognise a Response regulatory domain in the interval 3–117 (RILLAEDDND…DLVNEIEKML (115 aa)). Aspartate 52 is modified (4-aspartylphosphate).

Post-translationally, is phosphorylated by ChpT-P on Asp-52.

It localises to the cytoplasm. In terms of biological role, component of a regulatory phosphorelay system that controls B.abortus cell growth, division, and intracellular survival inside mammalian host cells. This signaling pathway is composed of CckA, ChpT, CtrA and CpdR. CpdR is a response regulator substrate of ChpT. Unphosphorylated CpdR controls steady-state levels of CtrA in the B.abortus cell, likely via CtrA destabilization and activation of its proteolysis. In Brucella abortus (strain 2308), this protein is Response regulator receiver protein CpdR.